A 191-amino-acid chain; its full sequence is Signal peptidase complex catalytic subunit sec11 (191 aa).

Residues 1–14 (MLSFLSSNISNARQ) lie on the Cytoplasmic side of the membrane. The chain crosses the membrane as a helical; Signal-anchor for type II membrane protein span at residues 15–33 (TLAQVLNFALVLSSAFMMW). The Lumenal portion of the chain corresponds to 34-191 (KGLSVFTGSS…MGVMVMLQRE (158 aa)). Active-site charge relay system residues include Ser53, His92, and Asp133. The interval 177–188 (VLLGIMGVMVML) is C-terminal short (CTS) helix.

The protein belongs to the peptidase S26B family. In terms of assembly, component of the signal peptidase complex (SPC) composed of a catalytic subunit SEC11 and three accessory subunits SPC1, SPC2 and SPC3. The complex induces a local thinning of the ER membrane which is used to measure the length of the signal peptide (SP) h-region of protein substrates. This ensures the selectivity of the complex towards h-regions shorter than 18-20 amino acids. SPC associates with the translocon complex.

The protein resides in the endoplasmic reticulum membrane. It carries out the reaction Cleavage of hydrophobic, N-terminal signal or leader sequences from secreted and periplasmic proteins.. Its function is as follows. Catalytic component of the signal peptidase complex (SPC) which catalyzes the cleavage of N-terminal signal sequences from nascent proteins as they are translocated into the lumen of the endoplasmic reticulum. Specifically cleaves N-terminal signal peptides that contain a hydrophobic alpha-helix (h-region) shorter than 18-20 amino acids. The sequence is that of Signal peptidase complex catalytic subunit sec11 (sec11) from Aspergillus terreus (strain NIH 2624 / FGSC A1156).